The primary structure comprises 426 residues: UPF0229 protein Csal_0882 (426 aa).

Basic and acidic residues predominate over residues 82-93 (FVEGDRLRRPGG). A disordered region spans residues 82–109 (FVEGDRLRRPGGEGRGGSGEGSASNQGE).

This sequence belongs to the UPF0229 family.

The polypeptide is UPF0229 protein Csal_0882 (Chromohalobacter salexigens (strain ATCC BAA-138 / DSM 3043 / CIP 106854 / NCIMB 13768 / 1H11)).